The following is a 267-amino-acid chain: uncharacterized protein (267 aa).

A helical membrane pass occupies residues 30–52 (FMRIFLLFLFFVLFTFGVEGYVI).

It localises to the membrane. This is an uncharacterized protein from Aquifex aeolicus (strain VF5).